A 374-amino-acid chain; its full sequence is Ribosomal RNA large subunit methyltransferase G (374 aa).

The protein belongs to the methyltransferase superfamily. RlmG family.

Its subcellular location is the cytoplasm. It catalyses the reaction guanosine(1835) in 23S rRNA + S-adenosyl-L-methionine = N(2)-methylguanosine(1835) in 23S rRNA + S-adenosyl-L-homocysteine + H(+). Specifically methylates the guanine in position 1835 (m2G1835) of 23S rRNA. The protein is Ribosomal RNA large subunit methyltransferase G of Pseudomonas fluorescens (strain Pf0-1).